Reading from the N-terminus, the 78-residue chain is DNA-directed RNA polymerase subunit omega (78 aa).

It belongs to the RNA polymerase subunit omega family. As to quaternary structure, the RNAP catalytic core consists of 2 alpha, 1 beta, 1 beta' and 1 omega subunit. When a sigma factor is associated with the core the holoenzyme is formed, which can initiate transcription.

It catalyses the reaction RNA(n) + a ribonucleoside 5'-triphosphate = RNA(n+1) + diphosphate. Its function is as follows. Promotes RNA polymerase assembly. Latches the N- and C-terminal regions of the beta' subunit thereby facilitating its interaction with the beta and alpha subunits. This chain is DNA-directed RNA polymerase subunit omega, found in Desulfovibrio desulfuricans (strain ATCC 27774 / DSM 6949 / MB).